The following is a 514-amino-acid chain: 2,3-bisphosphoglycerate-independent phosphoglycerate mutase (514 aa).

2 residues coordinate Mn(2+): D14 and S64. Residue S64 is the Phosphoserine intermediate of the active site. Substrate contacts are provided by residues H125, 155 to 156 (RD), R187, R193, 263 to 266 (RADR), and K336. Residues D403, H407, D444, H445, and H463 each coordinate Mn(2+).

Belongs to the BPG-independent phosphoglycerate mutase family. In terms of assembly, monomer. Requires Mn(2+) as cofactor.

The enzyme catalyses (2R)-2-phosphoglycerate = (2R)-3-phosphoglycerate. Its pathway is carbohydrate degradation; glycolysis; pyruvate from D-glyceraldehyde 3-phosphate: step 3/5. Catalyzes the interconversion of 2-phosphoglycerate and 3-phosphoglycerate. This is 2,3-bisphosphoglycerate-independent phosphoglycerate mutase from Shewanella baltica (strain OS185).